The chain runs to 462 residues: MQEGKISQIIGPVVDVDFPEGQLPSILDALTVTRQDGSKLVLETQQHLGEERVRTIAMEGTDGLVRGMSAVNTGKPIQVPVGGEVLGRMLNVVGDPIDGKGPVPAKKTYSIHRAAPKFDELSTKTEMFETGIKVIDLLEPYSRGGKTGLFGGAGVGKTVLIMELINNIAKQQSGYSVFAGVGERTREGNDLWHEMMESGVIDKTALVFGQMNEPPGARARVALTGLSIAEYFREEEGRDVLLFIDNIFRFTQAGSEVSALLGRMPSAVGYQPTLSTEMGELQDRITSTKKGSVTSVQAIYVPADDLTDPAPATAFTHLDATTVLSRQIAELGIYPAVDPLDSTSRILDPNIVGDDHYNTAQAVKQILQRYKDLQDIIAILGMDELSDEDKLVVARARKVQRFLSQPFFVAEAFTGLAGKYVKLEDTIKGFKEIIDGRHDNLPEAAFYLVGTIEEAVAKAKTL.

Residue 151–158 coordinates ATP; it reads GGAGVGKT.

Belongs to the ATPase alpha/beta chains family. F-type ATPases have 2 components, CF(1) - the catalytic core - and CF(0) - the membrane proton channel. CF(1) has five subunits: alpha(3), beta(3), gamma(1), delta(1), epsilon(1). CF(0) has three main subunits: a(1), b(2) and c(9-12). The alpha and beta chains form an alternating ring which encloses part of the gamma chain. CF(1) is attached to CF(0) by a central stalk formed by the gamma and epsilon chains, while a peripheral stalk is formed by the delta and b chains.

The protein resides in the cell inner membrane. It carries out the reaction ATP + H2O + 4 H(+)(in) = ADP + phosphate + 5 H(+)(out). In terms of biological role, produces ATP from ADP in the presence of a proton gradient across the membrane. The catalytic sites are hosted primarily by the beta subunits. The polypeptide is ATP synthase subunit beta 2 (Chlorobaculum tepidum (strain ATCC 49652 / DSM 12025 / NBRC 103806 / TLS) (Chlorobium tepidum)).